A 455-amino-acid chain; its full sequence is Na(+)/H(+) antiporter NhaA (455 aa).

A run of 11 helical transmembrane segments spans residues 31-51 (ASGILLIVSTAAALVWANSPW), 83-103 (GLMSIFFFLVGLEIKREVLIG), 113-133 (FPLIAAVGGTVVPAVIYLLCV), 141-161 (GWGIPMATDIAFALGVLILLG), 170-190 (VFVTALAIVDDIIAVLVIALF), 198-218 (VSLLVALGGVGIAFGFNLLGI), 231-251 (IWAAVLKSGVHATVAGVLLAF), 309-329 (GLQPWVSFLIMPLFAFSNAGV), 345-365 (IGVALGLFLGKPLGIWLFAWL), 383-403 (IFGASWICGIGFTMSLFIASL), and 414-434 (SKIGTLAASLVAGVCGSVVLW).

The protein belongs to the NhaA Na(+)/H(+) (TC 2.A.33) antiporter family.

The protein resides in the cell inner membrane. It carries out the reaction Na(+)(in) + 2 H(+)(out) = Na(+)(out) + 2 H(+)(in). Functionally, na(+)/H(+) antiporter that extrudes sodium in exchange for external protons. The polypeptide is Na(+)/H(+) antiporter NhaA (Koribacter versatilis (strain Ellin345)).